Consider the following 425-residue polypeptide: 3-phosphoshikimate 1-carboxyvinyltransferase (425 aa).

3-phosphoshikimate is bound by residues Lys22, Ser23, and Arg27. Lys22 is a binding site for phosphoenolpyruvate. Residues Gly95 and Arg123 each coordinate phosphoenolpyruvate. Ser169, Ser170, Gln171, Ser197, Asp313, Asn336, and Lys340 together coordinate 3-phosphoshikimate. Gln171 provides a ligand contact to phosphoenolpyruvate. Asp313 acts as the Proton acceptor in catalysis. Phosphoenolpyruvate-binding residues include Arg344, Arg386, and Lys411.

It belongs to the EPSP synthase family. As to quaternary structure, monomer.

The protein resides in the cytoplasm. It carries out the reaction 3-phosphoshikimate + phosphoenolpyruvate = 5-O-(1-carboxyvinyl)-3-phosphoshikimate + phosphate. It functions in the pathway metabolic intermediate biosynthesis; chorismate biosynthesis; chorismate from D-erythrose 4-phosphate and phosphoenolpyruvate: step 6/7. Catalyzes the transfer of the enolpyruvyl moiety of phosphoenolpyruvate (PEP) to the 5-hydroxyl of shikimate-3-phosphate (S3P) to produce enolpyruvyl shikimate-3-phosphate and inorganic phosphate. This Marinomonas sp. (strain MWYL1) protein is 3-phosphoshikimate 1-carboxyvinyltransferase.